Consider the following 495-residue polypeptide: Glutamyl-tRNA(Gln) amidotransferase subunit A (495 aa).

Active-site charge relay system residues include Lys78 and Ser158. Residue Ser182 is the Acyl-ester intermediate of the active site.

It belongs to the amidase family. GatA subfamily. As to quaternary structure, heterotrimer of A, B and C subunits.

The enzyme catalyses L-glutamyl-tRNA(Gln) + L-glutamine + ATP + H2O = L-glutaminyl-tRNA(Gln) + L-glutamate + ADP + phosphate + H(+). Its function is as follows. Allows the formation of correctly charged Gln-tRNA(Gln) through the transamidation of misacylated Glu-tRNA(Gln) in organisms which lack glutaminyl-tRNA synthetase. The reaction takes place in the presence of glutamine and ATP through an activated gamma-phospho-Glu-tRNA(Gln). The chain is Glutamyl-tRNA(Gln) amidotransferase subunit A from Roseobacter denitrificans (strain ATCC 33942 / OCh 114) (Erythrobacter sp. (strain OCh 114)).